The primary structure comprises 287 residues: Bifunctional protein FolD (287 aa).

NADP(+) is bound by residues 160-162, Ser189, and Thr230; that span reads GRS.

The protein belongs to the tetrahydrofolate dehydrogenase/cyclohydrolase family. In terms of assembly, homodimer.

The catalysed reaction is (6R)-5,10-methylene-5,6,7,8-tetrahydrofolate + NADP(+) = (6R)-5,10-methenyltetrahydrofolate + NADPH. The enzyme catalyses (6R)-5,10-methenyltetrahydrofolate + H2O = (6R)-10-formyltetrahydrofolate + H(+). The protein operates within one-carbon metabolism; tetrahydrofolate interconversion. In terms of biological role, catalyzes the oxidation of 5,10-methylenetetrahydrofolate to 5,10-methenyltetrahydrofolate and then the hydrolysis of 5,10-methenyltetrahydrofolate to 10-formyltetrahydrofolate. In Chlamydia trachomatis serovar D (strain ATCC VR-885 / DSM 19411 / UW-3/Cx), this protein is Bifunctional protein FolD.